The chain runs to 174 residues: Inactive signal peptidase IA (174 aa).

The Cytoplasmic portion of the chain corresponds to 1 to 7; sequence MKKVVKY. A helical membrane pass occupies residues 8 to 28; the sequence is LISLILAIIIVLFVQTFVIVG. The Extracellular portion of the chain corresponds to 29–174; that stretch reads HVIPNNDMSP…FSKWTIQFKS (146 aa).

It belongs to the peptidase S26 family.

It is found in the cell membrane. Catalytically inactive. The sequence is that of Inactive signal peptidase IA (spsA) from Staphylococcus aureus (strain MRSA252).